The chain runs to 324 residues: MSSSPDSPPILHRLPRVAIIGAGRVGSTLAQRIAEKNLADVVLLDIVEGMPQGLALDLLEARGIELHNRQIIGTNNYADTSGSQIVVITAGFPRKPGMSRDDLLRTNAKIVVEAAKQAIAYSPCAIFIVVTNPLDVMTYLAWEATGLPRNRIMGMAGVLDSARFETFIALELGVLPADVKAMVLGSHGDLMVPLSRHATVNGIPITELLDAATIERLVERTRNGGAEIVELMQTGGAFFAPASATSLMVESILLNQSRLLPVSVYLQGEYGLKDVVIGVPCRLGLNGIESVIELNLSDSEREALQTSAQSVQKNIERWHSTQHS.

NAD(+) is bound by residues Gly-21–Gly-26 and Asp-45. 2 residues coordinate substrate: Arg-94 and Arg-100. Residues Asn-107 and Val-130–Asn-132 each bind NAD(+). Positions 132 and 163 each coordinate substrate. The Proton acceptor role is filled by His-187.

This sequence belongs to the LDH/MDH superfamily. MDH type 3 family.

It catalyses the reaction (S)-malate + NAD(+) = oxaloacetate + NADH + H(+). Catalyzes the reversible oxidation of malate to oxaloacetate. This chain is Malate dehydrogenase, found in Trichormus variabilis (strain ATCC 29413 / PCC 7937) (Anabaena variabilis).